The primary structure comprises 212 residues: Pyridoxine/pyridoxamine 5'-phosphate oxidase (212 aa).

Substrate-binding positions include 7 to 10 (REEY) and Lys-65. FMN is bound by residues 60–65 (RTVLLK), 75–76 (FT), Lys-82, and Gln-104. Tyr-122, Arg-126, and Ser-130 together coordinate substrate. Residues 139 to 140 (QS) and Trp-184 each bind FMN. 190–192 (RLH) lines the substrate pocket. Arg-194 contributes to the FMN binding site.

It belongs to the pyridoxamine 5'-phosphate oxidase family. As to quaternary structure, homodimer. The cofactor is FMN.

The catalysed reaction is pyridoxamine 5'-phosphate + O2 + H2O = pyridoxal 5'-phosphate + H2O2 + NH4(+). It catalyses the reaction pyridoxine 5'-phosphate + O2 = pyridoxal 5'-phosphate + H2O2. It functions in the pathway cofactor metabolism; pyridoxal 5'-phosphate salvage; pyridoxal 5'-phosphate from pyridoxamine 5'-phosphate: step 1/1. The protein operates within cofactor metabolism; pyridoxal 5'-phosphate salvage; pyridoxal 5'-phosphate from pyridoxine 5'-phosphate: step 1/1. Functionally, catalyzes the oxidation of either pyridoxine 5'-phosphate (PNP) or pyridoxamine 5'-phosphate (PMP) into pyridoxal 5'-phosphate (PLP). In Rippkaea orientalis (strain PCC 8801 / RF-1) (Cyanothece sp. (strain PCC 8801)), this protein is Pyridoxine/pyridoxamine 5'-phosphate oxidase.